The following is a 274-amino-acid chain: tRNA-cytidine(32) 2-sulfurtransferase (274 aa).

A PP-loop motif motif is present at residues 40 to 45; the sequence is SGGKDS. Positions 115, 118, and 206 each coordinate [4Fe-4S] cluster.

The protein belongs to the TtcA family. As to quaternary structure, homodimer. It depends on Mg(2+) as a cofactor. Requires [4Fe-4S] cluster as cofactor.

The protein localises to the cytoplasm. The enzyme catalyses cytidine(32) in tRNA + S-sulfanyl-L-cysteinyl-[cysteine desulfurase] + AH2 + ATP = 2-thiocytidine(32) in tRNA + L-cysteinyl-[cysteine desulfurase] + A + AMP + diphosphate + H(+). Its pathway is tRNA modification. Its function is as follows. Catalyzes the ATP-dependent 2-thiolation of cytidine in position 32 of tRNA, to form 2-thiocytidine (s(2)C32). The sulfur atoms are provided by the cysteine/cysteine desulfurase (IscS) system. The protein is tRNA-cytidine(32) 2-sulfurtransferase of Pseudomonas syringae pv. tomato (strain ATCC BAA-871 / DC3000).